A 429-amino-acid chain; its full sequence is Ribosomal RNA small subunit methyltransferase B (429 aa).

S-adenosyl-L-methionine-binding positions include 254 to 260, aspartate 277, aspartate 303, and aspartate 322; that span reads CAAPGGK. Catalysis depends on cysteine 375, which acts as the Nucleophile. Residues 397-419 form a disordered region; sequence ALSETGTPDQPGQQNLPGGEEGD. A compositionally biased stretch (polar residues) spans 400-412; the sequence is ETGTPDQPGQQNL.

Belongs to the class I-like SAM-binding methyltransferase superfamily. RsmB/NOP family.

The protein localises to the cytoplasm. The enzyme catalyses cytidine(967) in 16S rRNA + S-adenosyl-L-methionine = 5-methylcytidine(967) in 16S rRNA + S-adenosyl-L-homocysteine + H(+). Specifically methylates the cytosine at position 967 (m5C967) of 16S rRNA. The protein is Ribosomal RNA small subunit methyltransferase B of Salmonella agona (strain SL483).